Reading from the N-terminus, the 161-residue chain is Small ribosomal subunit protein uS9 (161 aa).

Disordered stretches follow at residues Met-1–Pro-28 and Lys-142–Arg-161.

The protein belongs to the universal ribosomal protein uS9 family.

The polypeptide is Small ribosomal subunit protein uS9 (Clavibacter sepedonicus (Clavibacter michiganensis subsp. sepedonicus)).